Here is a 323-residue protein sequence, read N- to C-terminus: Arginase, hepatic (323 aa).

Mn(2+) contacts are provided by histidine 102, aspartate 125, histidine 127, and aspartate 129. Substrate contacts are provided by residues 127-131 (HADIN), 138-140 (SGN), and aspartate 184. 2 residues coordinate Mn(2+): aspartate 233 and aspartate 235. Positions 247 and 278 each coordinate substrate.

It belongs to the arginase family. In terms of assembly, homotrimer. Requires Mn(2+) as cofactor.

It catalyses the reaction L-arginine + H2O = urea + L-ornithine. Its pathway is nitrogen metabolism; urea cycle; L-ornithine and urea from L-arginine: step 1/1. The sequence is that of Arginase, hepatic from Aquarana catesbeiana (American bullfrog).